The chain runs to 199 residues: MANRGPSYGLSREVQEKIEQKYDADLENKLVDWIILQCAEDIEHPPPGRAHFQKWLMDGTVLCKLINSLYPPGQEPIPKISESKMAFKQMEQISQFLKAAEVYGVRTTDIFQTVDLWEGKDMAAVQRTLMALGSVAVTKDDGCYRGEPSWFHRKAQQNRRGFSEEQLRQGQNVIGLQMGSNKGASQAGMTGYGMPRQIM.

The region spanning Ala24–Ala136 is the Calponin-homology (CH) domain. Position 163 is a phosphoserine (Ser163). One copy of the Calponin-like repeat lies at Ile174–Met199. Residues Met178–Gly188 are compositionally biased toward polar residues. A disordered region spans residues Met178–Met199.

This sequence belongs to the calponin family.

In Mus musculus (Mouse), this protein is Transgelin-3 (Tagln3).